We begin with the raw amino-acid sequence, 404 residues long: Propionate kinase (404 aa).

It belongs to the acetokinase family. PduW subfamily.

The protein localises to the cytoplasm. It catalyses the reaction propanoate + ATP = propanoyl phosphate + ADP. It participates in polyol metabolism; 1,2-propanediol degradation. Functionally, works with phosphate acetyltransferase (pta) to capture exogenous propionate and regenerate propionyl-CoA during degradation of 1,2-propanediol (1,2-PD). In terms of biological role, expression of a cosmid containing the full 21-gene pdu operon in E.coli allows E.coli to grow on 1,2-propanediol (1,2-PD) with the appearance of bacterial microcompartments (BMC) in its cytoplasm. In Citrobacter freundii, this protein is Propionate kinase.